We begin with the raw amino-acid sequence, 556 residues long: Pumilio homolog 11 (556 aa).

Residues 215-556 form the PUM-HD domain; the sequence is GGSRELDGSA…RIFSKNLWKK (342 aa). Pumilio repeat units follow at residues 238–276, 277–313, 316–351, 353–388, 389–424, 425–459, 460–495, and 496–531; these read SMVD…IIFK, EVIN…ILIR, SKPG…SLVK, ALVP…FILE, AATK…KLVD, EISR…VLFE, LRGN…VNEL, and VSVL…SLVE.

The protein localises to the cytoplasm. Sequence-specific RNA-binding protein that regulates translation and mRNA stability by binding the 3'-UTR of target mRNAs. The chain is Pumilio homolog 11 (APUM11) from Arabidopsis thaliana (Mouse-ear cress).